A 187-amino-acid chain; its full sequence is Endoribonuclease YbeY (187 aa).

Residues H151, H155, and H161 each contribute to the Zn(2+) site.

It belongs to the endoribonuclease YbeY family. The cofactor is Zn(2+).

It localises to the cytoplasm. Its function is as follows. Single strand-specific metallo-endoribonuclease involved in late-stage 70S ribosome quality control and in maturation of the 3' terminus of the 16S rRNA. The sequence is that of Endoribonuclease YbeY from Prochlorococcus marinus (strain MIT 9313).